Reading from the N-terminus, the 204-residue chain is Casparian strip membrane protein 2 (204 aa).

The Cytoplasmic portion of the chain corresponds to 1–42 (MKNESTFIDVPAESSSAMKGKAPLIGVARDHTTSGSGGYNRG). A helical membrane pass occupies residues 43–63 (LAIFDFLLRLAAIVAALAAAA). Over 64–92 (TMGTSDETLPFFTQFLQFEASYDDLPTFQ) the chain is Extracellular. The chain crosses the membrane as a helical span at residues 93 to 113 (FFVIAMALVGGYLVLSLPISV). The Cytoplasmic segment spans residues 114-125 (VTILRPLATAPR). A helical transmembrane segment spans residues 126–146 (LLLLVLDTGVLALNTAAASSA). Residues 147–178 (AAISYLAHSGNQNTNWLPICQQFGDFCQKSSG) lie on the Extracellular side of the membrane. Residues 179–199 (AVVSAFVSVVFFTILVVISGV) traverse the membrane as a helical segment. At 200–204 (ALKRH) the chain is on the cytoplasmic side.

The protein belongs to the Casparian strip membrane proteins (CASP) family. Homodimer and heterodimers with other CASP proteins. Interacts with CASP1, CASP3 and CASP4.

Its subcellular location is the cell membrane. Regulates membrane-cell wall junctions and localized cell wall deposition. Required for establishment of the Casparian strip membrane domain (CSD) and the subsequent formation of Casparian strips, a cell wall modification of the root endodermis that determines an apoplastic barrier between the intraorganismal apoplasm and the extraorganismal apoplasm and prevents lateral diffusion. This chain is Casparian strip membrane protein 2 (CASP2), found in Arabidopsis thaliana (Mouse-ear cress).